Reading from the N-terminus, the 377-residue chain is 3-dehydroquinate synthase (377 aa).

Residues 113-117 (GVIGD), 137-138 (TT), Lys-150, and Lys-159 contribute to the NAD(+) site. 3 residues coordinate Zn(2+): Glu-192, His-254, and His-273.

The protein belongs to the sugar phosphate cyclases superfamily. Dehydroquinate synthase family. It depends on Co(2+) as a cofactor. The cofactor is Zn(2+). Requires NAD(+) as cofactor.

The protein resides in the cytoplasm. It carries out the reaction 7-phospho-2-dehydro-3-deoxy-D-arabino-heptonate = 3-dehydroquinate + phosphate. It participates in metabolic intermediate biosynthesis; chorismate biosynthesis; chorismate from D-erythrose 4-phosphate and phosphoenolpyruvate: step 2/7. In terms of biological role, catalyzes the conversion of 3-deoxy-D-arabino-heptulosonate 7-phosphate (DAHP) to dehydroquinate (DHQ). The polypeptide is 3-dehydroquinate synthase (Bartonella bacilliformis (strain ATCC 35685 / KC583 / Herrer 020/F12,63)).